A 567-amino-acid polypeptide reads, in one-letter code: MATEGRGKETNEIKTHFTTREGLYRLLPHSEYSRPNRVPFNSQGSNPVRVSFVNLNDQTGNGNRLCFSVGRELYVYIYKGVRKAADLSKPIDKRIYKGTQPTCHDFNHLTATAESVSLLVGFSAGQVQLIDPIKKETSKLFNEERLIDKSRVTCVKWVPGSDSLFLVAHSSGNMYSYNVEHTYGTTAPHYQLLKQGESFAVHNCKSKSTRDLKWTVGEGALNEFAFSPDGKFLACVSQDGFLRVFNFDSAELHGTMKSYFGGLLCLCWSPDGKYIVTGGEDDLVTVWSFLDCRVIARGRGHKSWVSVVAFDPYTTSVEESDPMEFSDSDKNFQDLLHFGRDRANSTQSRLSKQNSTDSRPVSVTYRFGSVGQDTQLCLWDLTEDILFPHQPLSRARAHANVMNATGLPAGSNGSAVTTPGNSVPPPLPRSNSLPHSAVSNAASKGSVMDGAITSGVSKFALLSLHDRKERHHEKDRKRNHSMGHISSKSSDKLNLVNKAKTDPAKTLGTSLCPRMEDVPLLEPLICKKIAHERLTVLVFLEDCIVTACQEGFICTWARPGKVSKFQP.

A2 bears the N-acetylalanine mark. WD repeat units follow at residues 147-187 (IDKS…GTTA), 216-257 (VGEG…GTMK), 258-297 (SYFG…VIAR), and 345-389 (STQS…LFPH). S355 and S358 each carry phosphoserine. The disordered stretch occupies residues 408-441 (PAGSNGSAVTTPGNSVPPPLPRSNSLPHSAVSNA). 2 stretches are compositionally biased toward polar residues: residues 411–421 (SNGSAVTTPGN) and 429–441 (RSNS…VSNA). Phosphoserine occurs at positions 430, 432, and 463. A compositionally biased stretch (basic residues) spans 468-481 (KERHHEKDRKRNHS). Residues 468–493 (KERHHEKDRKRNHSMGHISSKSSDKL) form a disordered region. The WD 5 repeat unit spans residues 529 to 566 (IAHERLTVLVFLEDCIVTACQEGFICTWARPGKVSKFQ).

Interacts with USP12; promotes translocation of USP12/WDR20 to the plasma membrane. Component of the USP12/WDR20/WDR48 deubiquitinating complex. Interacts with USP46; contributes to the cytoplasmic localization of the USP46/WDR20 complex. Component of the USP12/DMWD/WDR48 deubiquitinating complex.

It localises to the cytoplasm. The protein localises to the nucleus. Its function is as follows. Regulator of deubiquitinating complexes. Activates deubiquitinating activity of complexes containing USP12. Anchors at the base of the ubiquitin-contacting loop of USP12 and remotely modulates the catalytic center of the enzyme. Regulates shuttling of complexes containing USP12 between the plasma membrane, cytoplasm and nucleus. This Mus musculus (Mouse) protein is WD repeat-containing protein 20 (Wdr20).